The sequence spans 111 residues: Thiosulfate sulfurtransferase GlpE (111 aa).

The Rhodanese domain maps to 16 to 104 (QTENAVLLDV…WQRAGLPMET (89 aa)). The active-site Cysteine persulfide intermediate is Cys-64.

Belongs to the GlpE family.

The protein resides in the cytoplasm. It catalyses the reaction thiosulfate + hydrogen cyanide = thiocyanate + sulfite + 2 H(+). The enzyme catalyses thiosulfate + [thioredoxin]-dithiol = [thioredoxin]-disulfide + hydrogen sulfide + sulfite + 2 H(+). Its function is as follows. Transferase that catalyzes the transfer of sulfur from thiosulfate to thiophilic acceptors such as cyanide or dithiols. May function in a CysM-independent thiosulfate assimilation pathway by catalyzing the conversion of thiosulfate to sulfite, which can then be used for L-cysteine biosynthesis. The chain is Thiosulfate sulfurtransferase GlpE from Actinobacillus succinogenes (strain ATCC 55618 / DSM 22257 / CCUG 43843 / 130Z).